The following is a 203-amino-acid chain: Large ribosomal subunit protein bL25 (203 aa).

Belongs to the bacterial ribosomal protein bL25 family. CTC subfamily. Part of the 50S ribosomal subunit; part of the 5S rRNA/L5/L18/L25 subcomplex. Contacts the 5S rRNA. Binds to the 5S rRNA independently of L5 and L18.

Its function is as follows. This is one of the proteins that binds to the 5S RNA in the ribosome where it forms part of the central protuberance. This chain is Large ribosomal subunit protein bL25, found in Chlorobium phaeovibrioides (strain DSM 265 / 1930) (Prosthecochloris vibrioformis (strain DSM 265)).